The primary structure comprises 210 residues: LexA repressor (210 aa).

The H-T-H motif DNA-binding region spans 31 to 51; it reads RAEISRELGFRSPNAAEEHLK. Residues Ser-126 and Lys-163 each act as for autocatalytic cleavage activity in the active site.

This sequence belongs to the peptidase S24 family. As to quaternary structure, homodimer.

It carries out the reaction Hydrolysis of Ala-|-Gly bond in repressor LexA.. In terms of biological role, represses a number of genes involved in the response to DNA damage (SOS response), including recA and lexA. In the presence of single-stranded DNA, RecA interacts with LexA causing an autocatalytic cleavage which disrupts the DNA-binding part of LexA, leading to derepression of the SOS regulon and eventually DNA repair. This Actinobacillus succinogenes (strain ATCC 55618 / DSM 22257 / CCUG 43843 / 130Z) protein is LexA repressor.